Consider the following 239-residue polypeptide: Fatty acid metabolism regulator protein (239 aa).

Residues 6–74 (KGPASFAEKY…HGKPTRVNNF (69 aa)) enclose the HTH gntR-type domain. A DNA-binding region (H-T-H motif) is located at residues 34–53 (ERELSELIGVTRTTLREVLQ).

As to quaternary structure, homodimer.

It localises to the cytoplasm. Multifunctional regulator of fatty acid metabolism. This is Fatty acid metabolism regulator protein from Shewanella halifaxensis (strain HAW-EB4).